The sequence spans 588 residues: Adenine deaminase (588 aa).

It belongs to the metallo-dependent hydrolases superfamily. Adenine deaminase family. In terms of assembly, homodimer. Requires Mn(2+) as cofactor.

The enzyme catalyses adenine + H2O + H(+) = hypoxanthine + NH4(+). The chain is Adenine deaminase from Escherichia coli (strain SMS-3-5 / SECEC).